We begin with the raw amino-acid sequence, 376 residues long: Rhodopsin (376 aa).

The Extracellular segment spans residues methionine 1–tryptophan 51. A glycan (N-linked (GlcNAc...) asparagine) is linked at asparagine 22. The chain crosses the membrane as a helical span at residues histidine 52–isoleucine 76. The Cytoplasmic portion of the chain corresponds to phenylalanine 77 to asparagine 88. Residues leucine 89–cysteine 113 traverse the membrane as a helical segment. Residues tyrosine 114 to tyrosine 128 lie on the Extracellular side of the membrane. An intrachain disulfide couples cysteine 125 to cysteine 202. The helical transmembrane segment at alanine 129–leucine 148 threads the bilayer. Residues aspartate 149 to threonine 167 lie on the Cytoplasmic side of the membrane. The chain crosses the membrane as a helical span at residues alanine 168–asparagine 191. Residues arginine 192–serine 215 lie on the Extracellular side of the membrane. N-linked (GlcNAc...) asparagine glycosylation is present at asparagine 198. Residues tyrosine 216–valine 243 form a helical membrane-spanning segment. The Cytoplasmic portion of the chain corresponds to serine 244–lysine 278. The helical transmembrane segment at valine 279–isoleucine 302 threads the bilayer. The Extracellular segment spans residues phenylalanine 303–serine 309. Residues proline 310 to serine 334 traverse the membrane as a helical segment. Residue lysine 321 is modified to N6-(retinylidene)lysine. Residues histidine 335–alanine 376 are Cytoplasmic-facing. The tract at residues serine 353 to alanine 376 is disordered. The segment covering threonine 358–valine 368 has biased composition (polar residues).

It belongs to the G-protein coupled receptor 1 family. Opsin subfamily. Post-translationally, phosphorylated on some or all of the serine and threonine residues present in the C-terminal region.

The protein localises to the membrane. Functionally, visual pigments are the light-absorbing molecules that mediate vision. They consist of an apoprotein, opsin, covalently linked to cis-retinal. This Sphodromantis sp. (Mantis) protein is Rhodopsin.